The primary structure comprises 186 residues: ADP-ribosylation factor-like protein 8B (186 aa).

An intramembrane region (note=Mediates targeting to membranes) is located at residues 1-19; that stretch reads MLALISRLLDWFRSLFWKE. GTP is bound by residues 29–35, 71–75, and 130–133; these read QYSGKTT, DIGGQ, and NKRD. Residue Lys-141 forms a Glycyl lysine isopeptide (Lys-Gly) (interchain with G-Cter in ubiquitin) linkage.

The protein belongs to the small GTPase superfamily. Arf family. In terms of assembly, interacts with tubulin. Interacts with BORCS5; recruits ARL8B to lysosomes. Interacts with VPS41; the interaction mediates the recruitment of the HOPS complex to lysosomes. Interacts (GTP-bound form) with PLEKHM2 (via RUN domain); the interaction is required to recruit the motor protein kinesin-1 on lysosomes. Interacts (GTP-bound form) with PLEKHM1 (via RUN domain); the interaction is required for PLEKHM1 localization to lysosomes and for ARL8B function in delivery and degradation of endocytic and autophagic cargo in lysosomes. PLEKHM1 and PLEKHM2 compete for interaction with ARL8B. Interacts (GTP-bound form) with RUFY1; the interaction is required for RUFY1 endosomal location. When GTP-bound, interacts with RUFY3 and RUFY4, but not with RUFY1, nor RUFY2. Ubiquitinated at Lys-141 by RNF167, leading to its degradation.

The protein resides in the late endosome membrane. Its subcellular location is the lysosome membrane. The protein localises to the cytoplasm. It is found in the cytoskeleton. It localises to the spindle. The protein resides in the cell projection. Its subcellular location is the axon. The protein localises to the synapse. It is found in the cytolytic granule membrane. It localises to the early endosome membrane. It catalyses the reaction GTP + H2O = GDP + phosphate + H(+). Its function is as follows. Small GTPase which cycles between active GTP-bound and inactive GDP-bound states. In its active state, binds to a variety of effector proteins playing a key role in the regulation of lysosomal positioning which is important for nutrient sensing, natural killer cell-mediated cytotoxicity and antigen presentation. Along with its effectors, orchestrates lysosomal transport and fusion. Localizes specifically to lysosomal membranes and mediates anterograde lysosomal motility by recruiting PLEKHM2, which in turn recruits the motor protein kinesin-1 on lysosomes. Required for lysosomal and cytolytic granule exocytosis. Critical factor involved in NK cell-mediated cytotoxicity. Drives the polarization of cytolytic granules and microtubule-organizing centers (MTOCs) toward the immune synapse between effector NK lymphocytes and target cells. In neurons, mediates the anterograde axonal long-range transport of presynaptic lysosome-related vesicles required for presynaptic biogenesis and synaptic function. Also acts as a regulator of endosome to lysosome trafficking pathways of special significance for host defense. Recruits RUFY1 onto early endosomes regulating endosomes to trans-Golgi network proteins retrieval. Regulates cargo trafficking to lysosomes by binding to PLEKHM1 and recruiting the HOPS subunit VPS41, resulting in functional assembly of the HOPS complex on lysosomal membranes. Plays an important role in cargo delivery to lysosomes for antigen presentation and microbial killing. Directs the intersection of CD1d with lipid antigens in lysosomes, and plays a role in intersecting phagosomes with lysosomes to generate phagolysosomes that kill microbes. Involved in the process of MHC II presentation. Regulates the delivery of antigens to lysosomes and the formation of MHC II-peptide complexes through the recruitment of the HOPS complex to lysosomes allowing the fusion of late endosomes to lysosomes. May play a role in chromosome segregation. In Bos taurus (Bovine), this protein is ADP-ribosylation factor-like protein 8B (ARL8B).